Consider the following 419-residue polypeptide: DNA-directed RNA polymerase I subunit RPA49 (419 aa).

Phosphoserine is present on residues serine 35 and serine 163. Residue lysine 373 is modified to N6-acetyllysine. The interval 397–419 (GTLSLPLPPAQTSDRLAKRRKIT) is disordered.

The protein belongs to the eukaryotic RPA49/POLR1E RNA polymerase subunit family. In terms of assembly, component of the RNA polymerase I (Pol I) complex consisting of 13 subunits: a ten-subunit catalytic core composed of POLR1A/RPA1, POLR1B/RPA2, POLR1C/RPAC1, POLR1D/RPAC2, POLR1H/RPA12, POLR2E/RPABC1, POLR2F/RPABC2, POLR2H/RPABC3, POLR2K/RPABC4 and POLR2L/RPABC5; a mobile stalk subunit POLR1F/RPA43 protruding from the core and additional subunits homologous to general transcription factors POLR1E/RPA49 and POLR1G/RPA34. Forms a heterodimer with POLR1G/RPA34. Interacts with POLR1G. Also binds UBTF/UBF. Interacts with PWP1. In terms of processing, acetylated at Lys-373 by CREBBP/CBP, leading to decreased RNA polymerase I transcription. In normal conditions, deacetylated by SIRT7, promoting the association of RNA polymerase I with the rDNA promoter region and coding region. In response to stress, SIRT7 is released from nucleoli leading to hyperacetylation of POLR1E/PAF53 and decreased association of RNA polymerase I with the rDNA promoter region.

It localises to the nucleus. It is found in the nucleolus. Component of RNA polymerase I (Pol I), a DNA-dependent RNA polymerase which synthesizes ribosomal RNA precursors using the four ribonucleoside triphosphates as substrates. Appears to be involved in the formation of the initiation complex at the promoter by mediating the interaction between Pol I and UBTF/UBF. The protein is DNA-directed RNA polymerase I subunit RPA49 (POLR1E) of Homo sapiens (Human).